A 337-amino-acid chain; its full sequence is Probable cytosolic iron-sulfur protein assembly protein CIAO1 homolog (337 aa).

7 WD repeats span residues 15-54 (DDTS…DSKM), 65-104 (SHTR…FAEV), 109-148 (GHES…DFSV), 154-193 (PHTQ…WVTQ), 199-238 (CHVG…SKSA), 253-292 (NTRW…ESPV), and 301-337 (RHEL…ELEI).

It belongs to the WD repeat CIA1 family.

Essential component of the cytosolic iron-sulfur (Fe/S) protein assembly machinery. Required for the maturation of extramitochondrial Fe/S proteins. The chain is Probable cytosolic iron-sulfur protein assembly protein CIAO1 homolog from Caenorhabditis elegans.